Here is a 409-residue protein sequence, read N- to C-terminus: Indian hedgehog protein (409 aa).

The first 23 residues, 1 to 23 (MQLPKVVLLLCAAALLLSGAVRG), serve as a signal peptide directing secretion. Residue Cys-24 is the site of N-palmitoyl cysteine attachment. Residues Glu-89, Glu-90, Asp-95, Thr-125, Glu-126, Asp-129, and Asp-131 each coordinate Ca(2+). Zn(2+) contacts are provided by His-140, Asp-147, and His-182. A lipid anchor (Cholesterol glycine ester) is attached at Gly-197.

Belongs to the hedgehog family. As to quaternary structure, multimer. Interacts with BOC and CDON. Interacts with PTCH1. Interacts with glypican GPC3. Post-translationally, cholesterylation is required for N-product targeting to lipid rafts and multimerization. In terms of processing, the C-terminal domain displays an autoproteolysis activity and a cholesterol transferase activity. Both activities result in the cleavage of the full-length protein and covalent attachment of a cholesterol moiety to the C-terminal of the newly generated N-product. The N-product is the active species in both local and long-range signaling, whereas the C-product is degraded in the endoplasmic reticulum. N-palmitoylation by HHAT of N-product is required for indian hedgehog protein N-product multimerization and full activity. As to expression, expressed in the marginal zone at early gastrulation. At stage 14, expression begins in the neural plate with expression becoming more prominent in the anterodorsal area at neural tube closure. At this stage, also expressed diffusely in the somitic and pre-somitic mesoderm. By the early tadpole (stages 28-30), expression is widespread throughout anterior structures with highest levels in the otic vesicle, the eye, and the branchial arches.

The protein resides in the cell membrane. The protein localises to the endoplasmic reticulum membrane. Its subcellular location is the golgi apparatus membrane. It localises to the secreted. It carries out the reaction glycyl-L-cysteinyl-[protein] + cholesterol + H(+) = [protein]-C-terminal glycyl cholesterol ester + N-terminal L-cysteinyl-[protein]. Its function is as follows. Signal involved in the early induction and patterning of anterodorsal ectoderm, nervous system and somites. Induces ectopic cement gland formation in embryos. It is involved in the regulation of endochondral skeleton formation, and the development of retinal pigment epithelium (RPE), photoreceptors and periocular tissues. In terms of biological role, the C-terminal part of the indian hedgehog protein precursor displays an autoproteolysis and a cholesterol transferase activity. Both activities result in the cleavage of the full-length protein into two parts followed by the covalent attachment of a cholesterol moiety to the C-terminal of the newly generated N-product. Both activities occur in the endoplasmic reticulum. Functionally, the dually lipidated indian hedgehog protein N-product is a morphogen which is essential for a variety of patterning events during development. Binds to the patched (PTCH1) receptor, which functions in association with smoothened (SMO), to activate the transcription of target genes. Signal involved in the early induction and patterning of anterodorsal ectoderm, nervous system and somites. Induces ectopic cement gland formation in embryos. The sequence is that of Indian hedgehog protein from Xenopus laevis (African clawed frog).